The chain runs to 119 residues: Large ribosomal subunit protein uL18 (119 aa).

Belongs to the universal ribosomal protein uL18 family. As to quaternary structure, part of the 50S ribosomal subunit; part of the 5S rRNA/L5/L18/L25 subcomplex. Contacts the 5S and 23S rRNAs.

In terms of biological role, this is one of the proteins that bind and probably mediate the attachment of the 5S RNA into the large ribosomal subunit, where it forms part of the central protuberance. This Anaeromyxobacter dehalogenans (strain 2CP-1 / ATCC BAA-258) protein is Large ribosomal subunit protein uL18.